Reading from the N-terminus, the 209-residue chain is MIGLIGRKVGMTRIFTEEGISIPVTVVEVEANRVTQVKSLETDGYNAIQITTGTKKANRVSKPAAGHFAKAGVEAGRGLWEFRLENGEEFAVGAELNVELFNEVKKVDVTGTSKGKGFQGVIKRWNFSTQDMTHGNSLSHRAPGSIGQCQTPGRVFKGKKMAGHMGAERVTTQNLEIVRVDAERNLLLIKGAVPGSIGGNVIVKPAVKA.

Position 150 is an N5-methylglutamine (Q150).

This sequence belongs to the universal ribosomal protein uL3 family. In terms of assembly, part of the 50S ribosomal subunit. Forms a cluster with proteins L14 and L19. Post-translationally, methylated by PrmB.

Its function is as follows. One of the primary rRNA binding proteins, it binds directly near the 3'-end of the 23S rRNA, where it nucleates assembly of the 50S subunit. In Photobacterium profundum (strain SS9), this protein is Large ribosomal subunit protein uL3.